The chain runs to 413 residues: RNA-binding protein 41 (413 aa).

Residues 225 to 247 (SGSGTAEKPSLLQDKGKQAAQGK) are disordered. An RRM domain is found at 309–387 (KVLYLKNLSP…KILVIEFAKS (79 aa)).

May bind RNA. In Mus musculus (Mouse), this protein is RNA-binding protein 41 (Rbm41).